The chain runs to 181 residues: UPF0302 protein LMOf2365_1950 (181 aa).

The protein belongs to the UPF0302 family.

This chain is UPF0302 protein LMOf2365_1950, found in Listeria monocytogenes serotype 4b (strain F2365).